The primary structure comprises 84 residues: Small ribosomal subunit protein bS20 (84 aa).

Belongs to the bacterial ribosomal protein bS20 family.

In terms of biological role, binds directly to 16S ribosomal RNA. The protein is Small ribosomal subunit protein bS20 of Latilactobacillus sakei subsp. sakei (strain 23K) (Lactobacillus sakei subsp. sakei).